The primary structure comprises 179 residues: Ribosome maturation factor RimM (179 aa).

In terms of domain architecture, PRC barrel spans 102-179; it reads DGEYYWYQLE…EMKVEWDADF (78 aa).

It belongs to the RimM family. In terms of assembly, binds ribosomal protein uS19.

The protein localises to the cytoplasm. In terms of biological role, an accessory protein needed during the final step in the assembly of 30S ribosomal subunit, possibly for assembly of the head region. Essential for efficient processing of 16S rRNA. May be needed both before and after RbfA during the maturation of 16S rRNA. It has affinity for free ribosomal 30S subunits but not for 70S ribosomes. In Pseudomonas syringae pv. tomato (strain ATCC BAA-871 / DC3000), this protein is Ribosome maturation factor RimM.